The primary structure comprises 251 residues: Triosephosphate isomerase (251 aa).

9–11 (NWK) serves as a coordination point for substrate. His94 functions as the Electrophile in the catalytic mechanism. The active-site Proton acceptor is Glu166. Substrate-binding positions include Gly172, Ser211, and 232–233 (GG).

The protein belongs to the triosephosphate isomerase family. Homodimer.

It localises to the cytoplasm. The enzyme catalyses D-glyceraldehyde 3-phosphate = dihydroxyacetone phosphate. It functions in the pathway carbohydrate biosynthesis; gluconeogenesis. It participates in carbohydrate degradation; glycolysis; D-glyceraldehyde 3-phosphate from glycerone phosphate: step 1/1. Its function is as follows. Involved in the gluconeogenesis. Catalyzes stereospecifically the conversion of dihydroxyacetone phosphate (DHAP) to D-glyceraldehyde-3-phosphate (G3P). This is Triosephosphate isomerase from Xanthomonas campestris pv. campestris (strain 8004).